A 294-amino-acid polypeptide reads, in one-letter code: Ribosomal RNA small subunit methyltransferase A (294 aa).

Residues N33, L35, G60, E81, D106, and N131 each contribute to the S-adenosyl-L-methionine site.

It belongs to the class I-like SAM-binding methyltransferase superfamily. rRNA adenine N(6)-methyltransferase family. RsmA subfamily.

It localises to the cytoplasm. The catalysed reaction is adenosine(1518)/adenosine(1519) in 16S rRNA + 4 S-adenosyl-L-methionine = N(6)-dimethyladenosine(1518)/N(6)-dimethyladenosine(1519) in 16S rRNA + 4 S-adenosyl-L-homocysteine + 4 H(+). Specifically dimethylates two adjacent adenosines (A1518 and A1519) in the loop of a conserved hairpin near the 3'-end of 16S rRNA in the 30S particle. May play a critical role in biogenesis of 30S subunits. The protein is Ribosomal RNA small subunit methyltransferase A of Lactococcus lactis subsp. lactis (strain IL1403) (Streptococcus lactis).